Consider the following 110-residue polypeptide: Small ribosomal subunit protein uS17 (110 aa).

It belongs to the universal ribosomal protein uS17 family. As to quaternary structure, part of the 30S ribosomal subunit.

In terms of biological role, one of the primary rRNA binding proteins, it binds specifically to the 5'-end of 16S ribosomal RNA. This chain is Small ribosomal subunit protein uS17, found in Petrotoga mobilis (strain DSM 10674 / SJ95).